Consider the following 425-residue polypeptide: Histone-binding protein RBBP4 (425 aa).

Alanine 2 carries the N-acetylalanine modification. WD repeat units lie at residues 32 to 125 (YDLV…NHEG), 126 to 175 (EVNR…RLRG), 176 to 223 (HQKE…KTIF), 225 to 270 (GHTA…HSVD), 271 to 314 (AHTA…HSFE), 315 to 371 (SHKD…FIHG), and 372 to 404 (GHTA…VWQM).

Belongs to the WD repeat RBAP46/RBAP48/MSI1 family. Binds directly to histone H4, probably via helix 1 of the histone fold, a region that is not accessible when histone H4 is in chromatin. Forms a large corepressor complex that contains ncor1, sin3a and possibly sin3b, histone deacetylases hdac2, hdac1, rbbp4 and possibly rbbp7.

The protein resides in the nucleus. The protein localises to the chromosome. It localises to the telomere. Core histone-binding subunit that may target chromatin assembly factors, chromatin remodeling factors and histone deacetylases to their histone substrates in a manner that is regulated by nucleosomal DNA. Component of several complexes which regulate chromatin metabolism. This is Histone-binding protein RBBP4 (rbbp4) from Xenopus tropicalis (Western clawed frog).